The following is a 207-amino-acid chain: Large ribosomal subunit protein uL4 (207 aa).

It belongs to the universal ribosomal protein uL4 family. Part of the 50S ribosomal subunit.

In terms of biological role, one of the primary rRNA binding proteins, this protein initially binds near the 5'-end of the 23S rRNA. It is important during the early stages of 50S assembly. It makes multiple contacts with different domains of the 23S rRNA in the assembled 50S subunit and ribosome. Its function is as follows. Forms part of the polypeptide exit tunnel. This chain is Large ribosomal subunit protein uL4, found in Geobacter metallireducens (strain ATCC 53774 / DSM 7210 / GS-15).